The chain runs to 520 residues: Hydroxymethylglutaryl-CoA synthase, cytoplasmic (520 aa).

The residue at position 4 (serine 4) is a Phosphoserine. Aspartate 43 and alanine 44 together coordinate (3S)-3-hydroxy-3-methylglutaryl-CoA. 44 to 46 is a binding site for CoA; that stretch reads AGK. Position 46 is an N6-acetyllysine (lysine 46). Residue glutamate 95 is the Proton donor/acceptor of the active site. (3S)-3-hydroxy-3-methylglutaryl-CoA contacts are provided by cysteine 129, asparagine 167, threonine 171, serine 221, and histidine 264. Cysteine 129 acts as the Acyl-thioester intermediate in catalysis. Position 167 (asparagine 167) interacts with CoA. CoA is bound at residue serine 221. The active-site Proton donor/acceptor is histidine 264. Residues lysine 269 and lysine 273 each coordinate CoA. (3S)-3-hydroxy-3-methylglutaryl-CoA-binding residues include lysine 273, asparagine 343, and serine 377. The residue at position 273 (lysine 273) is an N6-acetyllysine. Residues 486–520 form a disordered region; that stretch reads SNTATEHIPSPAKKVPRLPATAAESESAVISNGEH. Residues serine 495 and serine 516 each carry the phosphoserine modification.

Belongs to the thiolase-like superfamily. HMG-CoA synthase family. As to quaternary structure, homodimer.

The protein resides in the cytoplasm. The enzyme catalyses acetoacetyl-CoA + acetyl-CoA + H2O = (3S)-3-hydroxy-3-methylglutaryl-CoA + CoA + H(+). The protein operates within metabolic intermediate biosynthesis; (R)-mevalonate biosynthesis; (R)-mevalonate from acetyl-CoA: step 2/3. This enzyme condenses acetyl-CoA with acetoacetyl-CoA to form HMG-CoA, which is converted by HMG-CoA reductase (HMGCR) into mevalonate, a precursor for cholesterol synthesis. This chain is Hydroxymethylglutaryl-CoA synthase, cytoplasmic, found in Cricetulus griseus (Chinese hamster).